The sequence spans 288 residues: Elongation factor Ts (288 aa).

The interval 79 to 82 (TDFV) is involved in Mg(2+) ion dislocation from EF-Tu.

This sequence belongs to the EF-Ts family.

The protein localises to the cytoplasm. Its function is as follows. Associates with the EF-Tu.GDP complex and induces the exchange of GDP to GTP. It remains bound to the aminoacyl-tRNA.EF-Tu.GTP complex up to the GTP hydrolysis stage on the ribosome. The sequence is that of Elongation factor Ts from Ehrlichia canis (strain Jake).